Reading from the N-terminus, the 26-residue chain is Potassium channel toxin alpha-KTx6 OcyKTx1 (26 aa).

Cysteines 3 and 24 form a disulfide.

This sequence belongs to the short scorpion toxin superfamily. Potassium channel inhibitor family. Alpha-KTx 06 subfamily. In terms of tissue distribution, expressed by the venom gland.

The protein localises to the secreted. Its function is as follows. Blocks voltage-gated potassium channels. This is Potassium channel toxin alpha-KTx6 OcyKTx1 from Opisthacanthus cayaporum (South American scorpion).